A 197-amino-acid chain; its full sequence is dITP/XTP pyrophosphatase (197 aa).

8-13 (TGNPGK) is a substrate binding site. Glu-40 and Asp-69 together coordinate Mg(2+). Asp-69 functions as the Proton acceptor in the catalytic mechanism. Substrate-binding positions include Ser-70, 154–157 (FGYD), Lys-177, and 182–183 (HR).

The protein belongs to the HAM1 NTPase family. In terms of assembly, homodimer. Mg(2+) is required as a cofactor.

It carries out the reaction XTP + H2O = XMP + diphosphate + H(+). The catalysed reaction is dITP + H2O = dIMP + diphosphate + H(+). It catalyses the reaction ITP + H2O = IMP + diphosphate + H(+). In terms of biological role, pyrophosphatase that catalyzes the hydrolysis of nucleoside triphosphates to their monophosphate derivatives, with a high preference for the non-canonical purine nucleotides XTP (xanthosine triphosphate), dITP (deoxyinosine triphosphate) and ITP. Seems to function as a house-cleaning enzyme that removes non-canonical purine nucleotides from the nucleotide pool, thus preventing their incorporation into DNA/RNA and avoiding chromosomal lesions. The polypeptide is dITP/XTP pyrophosphatase (Yersinia pestis).